We begin with the raw amino-acid sequence, 552 residues long: Cycloheximide resistance protein (552 aa).

Residues 46–70 (VLNSSDKSQSSENKEQTEGDQATIQ) form a disordered region. Residues 47–56 (LNSSDKSQSS) are compositionally biased toward polar residues. A run of 12 helical transmembrane segments spans residues 100–120 (AIAA…SAIY), 137–157 (LATL…LFWS), 168–188 (TPLY…TALS), 194–213 (LSVL…STGG), 225–246 (YSIA…GPLI), 262–282 (WSFW…SFSL), 346–362 (IYIA…FESV), 381–399 (YVST…LPTV), 419–439 (LPPA…FGWT), 445–464 (NWFV…FIIF), 477–494 (VEYL…RSVS), and 518–539 (WGSS…FFYL).

The protein belongs to the major facilitator superfamily. CAR1 family.

The protein localises to the membrane. In terms of biological role, probable transporter. Confers resistance to cycloheximide. This Candida maltosa (Yeast) protein is Cycloheximide resistance protein (CYHR).